The primary structure comprises 130 residues: Anti-adapter protein IraD (130 aa).

This sequence belongs to the GpW/Gp25 family. IraD subfamily. In terms of assembly, interacts with RssB.

The protein localises to the cytoplasm. In terms of biological role, inhibits RpoS proteolysis by regulating RssB activity, thereby increasing the stability of the sigma stress factor RpoS during oxidative stress. Its effect on RpoS stability is due to its interaction with RssB, which probably blocks the interaction of RssB with RpoS, and the consequent delivery of the RssB-RpoS complex to the ClpXP protein degradation pathway. The protein is Anti-adapter protein IraD of Escherichia coli (strain K12 / MC4100 / BW2952).